Here is a 688-residue protein sequence, read N- to C-terminus: Subtilisin-like protease 1 (688 aa).

Positions 1 to 25 (MMLNKKVVALCTLTLHLFCIFLCLG) are cleaved as a signal peptide. Residues 26–217 (KEVRSEENGK…IESDKLVSAD (192 aa)) constitute a propeptide, inhibition peptide. Positions 99–129 (EKNKNDNHNNNNNNISSSSSSSSNTFGEEKE) are disordered. Residues 106 to 122 (HNNNNNNISSSSSSSSN) show a composition bias toward low complexity. A glycan (N-linked (GlcNAc...) asparagine) is linked at N112. Positions 145, 148, and 150 each coordinate Ca(2+). The N-linked (GlcNAc...) asparagine glycan is linked to N171. G205 serves as a coordination point for Ca(2+). An N-linked (GlcNAc...) asparagine glycan is attached at N261. Disordered regions lie at residues 264-284 (HAAT…DTFS) and 303-332 (NNNN…RPGK). Residues 303-328 (NNNNYYYSHSSNGHNSSSRNSSSSRS) are compositionally biased toward low complexity. N-linked (GlcNAc...) asparagine glycosylation is found at N317 and N322. D337 is a Ca(2+) binding site. The Peptidase S8 domain maps to 343–661 (QWGLDLSRLD…AGYADINKAV (319 aa)). Intrachain disulfides connect C369-C479 and C458-C475. D372 functions as the Charge relay system in the catalytic mechanism. Ca(2+)-binding residues include D381, E392, R396, F399, D400, D401, D402, N404, I406, D408, and D409. N417 carries an N-linked (GlcNAc...) asparagine glycan. Catalysis depends on H428, which acts as the Charge relay system. Residues I439, N442, I444, and V446 each contribute to the Ca(2+) site. N-linked (GlcNAc...) asparagine glycans are attached at residues N488, N501, and N520. A disulfide bridge links C521 with C534. The N-linked (GlcNAc...) asparagine glycan is linked to N603. The active-site Charge relay system is the S606. N-linked (GlcNAc...) asparagine glycosylation occurs at N675.

Belongs to the peptidase S8 family. In terms of assembly, heterodimer between p54 form and prodomain p31; the interaction inhibits p54 catalytic activity. Heterodimer p31-p54 is monomeric at basic pH and dimeric at acidic pH; dimerization is driven by the N-terminal prodomain (p31). Ca(2+) is required as a cofactor. In terms of processing, the prodomain (p31) is cleaved, probably by autocatalysis, during the transport to or in the Golgi apparatus, and remains non-covalently associated with the p54 form as an inhibitor. p54 is further cleaved into the p47 form. The p54-to-p47 conversion can be also autocatalytic. This cleavage is likely occurring in the exoneme prior to egress and is mediated by PMX/plasmepsin X. Heterodimer p31-p54 is activated by cleavage of prodomain (p31) by the aspartic protease PMX; cleavage by PMX abolishes inhibitory capacity of p31. Primary autocatalytic processing of SUB1 is essential for parasite growth; the p54-to-p47 conversion is dispensable for SUB1 functions in the parasites. The disulfide bond between Cys-521 and Cys-534 acts as a redox-sensitive disulfide switch. The oxidized form is required for catalytic activity. Post-translationally, the relevance of the N-glycosylation is not clear. In an insect expression system, SUB1 glycosylation appears to affect its processing into the active mature form suggesting that SUB1 may not be N-glycosylated in parasites.

The protein localises to the secreted. It is found in the parasitophorous vacuole lumen. It catalyses the reaction Hydrolysis of proteins with broad specificity for peptide bonds, and a preference for a large uncharged residue in P1. Hydrolyzes peptide amides.. Its activity is regulated as follows. p54 and probably p47 forms are inhibited by the non-covalent interaction with the cleaved propeptide. Inhibited by subtilisin propeptide-like protein SUB1-ProM. Inhibited by small molecule MRT12113. Functionally, serine protease which plays an essential role in merozoite invasion of and egress from host erythrocytes by processing and activating various merozoite surface and parasitophorous vacuole proteins. Mediates the proteolytic maturation of serine proteases SERA4, SERA5 and SERA6 just prior to merozoite egress. Prior to merozoite egress, cleaves merozoite surface proteins MSP1, MSP6 and MSP7, which form the MSP1/6/7 complex, and thereby may prime the parasite cell surface for invasion of fresh erythrocytes. Prior to merozoite egress, cleaves MSRP2 converting it to MSRP2 p25 form, and RAP1 converting it to RAP1 p67 form. The chain is Subtilisin-like protease 1 from Plasmodium falciparum (isolate 3D7).